The chain runs to 536 residues: Phosphoenolpyruvate carboxykinase (ATP) (536 aa).

Substrate contacts are provided by Arg61, Tyr195, and Lys201. ATP contacts are provided by residues Lys201, His220, and 236 to 244 (GLSGTGKTT). Positions 201 and 220 each coordinate Mn(2+). Position 257 (Asp257) interacts with Mn(2+). ATP contacts are provided by Glu285, Arg322, and Thr447. Arg322 lines the substrate pocket.

Belongs to the phosphoenolpyruvate carboxykinase (ATP) family. The cofactor is Mn(2+).

It localises to the cytoplasm. It carries out the reaction oxaloacetate + ATP = phosphoenolpyruvate + ADP + CO2. It participates in carbohydrate biosynthesis; gluconeogenesis. Functionally, involved in the gluconeogenesis. Catalyzes the conversion of oxaloacetate (OAA) to phosphoenolpyruvate (PEP) through direct phosphoryl transfer between the nucleoside triphosphate and OAA. In Rhizobium etli (strain ATCC 51251 / DSM 11541 / JCM 21823 / NBRC 15573 / CFN 42), this protein is Phosphoenolpyruvate carboxykinase (ATP).